The chain runs to 319 residues: Tetrahydromethanopterin S-methyltransferase subunit H (319 aa).

The protein belongs to the MtrH family. The complex is composed of 8 subunits; MtrA, MtrB, MtrC, MtrD, MtrE, MtrF, MtrG and MtrH.

It carries out the reaction 5-methyl-5,6,7,8-tetrahydromethanopterin + coenzyme M + 2 Na(+)(in) = 5,6,7,8-tetrahydromethanopterin + methyl-coenzyme M + 2 Na(+)(out). Its pathway is one-carbon metabolism; methanogenesis from CO(2); methyl-coenzyme M from 5,10-methylene-5,6,7,8-tetrahydromethanopterin: step 2/2. Its function is as follows. Part of a complex that catalyzes the formation of methyl-coenzyme M and tetrahydromethanopterin from coenzyme M and methyl-tetrahydromethanopterin. This is an energy-conserving, sodium-ion translocating step. MtrH catalyzes the transfer of the methyl group from methyl-tetrahydromethanopterin to the corrinoid prosthetic group of MtrA. The chain is Tetrahydromethanopterin S-methyltransferase subunit H from Methanococcus maripaludis (strain DSM 14266 / JCM 13030 / NBRC 101832 / S2 / LL).